We begin with the raw amino-acid sequence, 503 residues long: MAKWLNKYFSLGNSKTKSPPQPPRPDYREQRRRGERREQPPQAVPQACSASSASCGSAAACFSASSGSLPDDSGSTSDLIRAYRAQKERDFEDPYNGPGSSLRKLRAMCRLDYCGGGGGGDPGGGQRAFTAAAGAAGCCCAAAGAGAAASSSSSSGSPHLYRSSSERRPTTPAEVRYISPKHRLIKVESASAAGDPPGGVCSGGRTWSPTTCGGKKLLNKCSAEETGAGQKDKVTIADDYSDPFDAKSDLKSKAGKGESAGYMEPYEAQRIMTEFQRQESVRSQHKGIQLYDTPYEPEGQSVDSDSESTVSLRLRESKLPQDDDRPADEYDQPWEWNRVTIPALAAQFNGNEKRQSSPSPSRDRRRQLRAPGGGFKPIKHGSPEFCGILGERVDPTIPLEKQIWYHGAISRSDAENLLRLCKECSYLVRNSQTSKHDYSLSLKSNQGFMHMKLAKTKEKYVLGQNSPPFDSVPEVIHYYTTRKLPIKGAEHLSLLYPVAVRTL.

Disordered regions lie at residues 1–49 and 61–81; these read MAKW…QACS and CFSASSGSLPDDSGSTSDLIR. Residue Ser101 is modified to Phosphoserine. Low complexity predominate over residues 147–157; that stretch reads AAASSSSSSGS. The tract at residues 147–180 is disordered; sequence AAASSSSSSGSPHLYRSSSERRPTTPAEVRYISP. Residue Lys186 forms a Glycyl lysine isopeptide (Lys-Gly) (interchain with G-Cter in SUMO2) linkage. 3 disordered regions span residues 225–262, 292–333, and 345–381; these read ETGAGQKDKVTIADDYSDPFDAKSDLKSKAGKGESAGY, DTPY…YDQP, and AAQFNGNEKRQSSPSPSRDRRRQLRAPGGGFKPIKHG. A compositionally biased stretch (basic and acidic residues) spans 244-256; that stretch reads FDAKSDLKSKAGK. Phosphoserine is present on residues Ser301 and Ser311. The span at 301 to 311 shows a compositional bias: polar residues; sequence SVDSDSESTVS. Positions 313 to 328 are enriched in basic and acidic residues; sequence RLRESKLPQDDDRPAD. The residue at position 382 (Ser382) is a Phosphoserine. Residues 404-498 form the SH2 domain; that stretch reads WYHGAISRSD…AEHLSLLYPV (95 aa).

As to quaternary structure, interacts with phosphorylated 'Tyr-720' of the ligand-activated receptor PDGFRA via its SH2 domain. Interacts with the ligand-activated receptors PDGFRB, FGFR1, KDR/VEGFR2, IL2RB and IL2RG. Interacts with EPS8 and V-SRC. Interacts with GRB2 and GRAP. Interacts with CD3Z. Interacts with tyrosine-phosphorylated LAT upon T-cell antigen receptor activation. Interacts with PLCG1. Interacts with ZAP70, LCP2/SLP-76, VAV1 and GRAP2. Interacts with JAK1 and JAK3. Interacts with PTK2/FAK1. Interacts with CRK/CrKII. Interacts with IRS2. Interacts with PTPN11. In terms of processing, phosphorylated upon PDGFRA, PDGFRB, TCR, IL2 receptor, FGFR1 or VEGFR2 activation. In terms of tissue distribution, expressed in heart, liver, brain and kidney (at protein level).

It localises to the cytoplasm. The protein localises to the cell membrane. Its function is as follows. Adapter protein which regulates several signal transduction cascades by linking activated receptors to downstream signaling components. May play a role in angiogenesis by regulating FGFR1, VEGFR2 and PDGFR signaling. May also play a role in T-cell antigen receptor/TCR signaling, interleukin-2 signaling, apoptosis and neuronal cells differentiation by mediating basic-FGF and NGF-induced signaling cascades. May also regulate IRS1 and IRS2 signaling in insulin-producing cells. The polypeptide is SH2 domain-containing adapter protein B (Shb) (Mus musculus (Mouse)).